The sequence spans 321 residues: Ribosomal RNA small subunit methyltransferase H (321 aa).

S-adenosyl-L-methionine contacts are provided by residues 29-31 (GGH), Asp48, Tyr76, Asp97, and Gln104. Residues 277–321 (LTRGAEPASETEKAENPRAASVRLRAVERTAPNPDHTRKPTGGAS) are disordered.

The protein belongs to the methyltransferase superfamily. RsmH family.

The protein resides in the cytoplasm. It carries out the reaction cytidine(1402) in 16S rRNA + S-adenosyl-L-methionine = N(4)-methylcytidine(1402) in 16S rRNA + S-adenosyl-L-homocysteine + H(+). Its function is as follows. Specifically methylates the N4 position of cytidine in position 1402 (C1402) of 16S rRNA. In Frankia casuarinae (strain DSM 45818 / CECT 9043 / HFP020203 / CcI3), this protein is Ribosomal RNA small subunit methyltransferase H.